A 640-amino-acid polypeptide reads, in one-letter code: MKFQMKMKSELCRTYKYWLILLVLWLSGVTQRETGVLIVDADCIPPNGCKALAYYRLKQGDDLEKLQGRFQTNNSEVLAYNPQLVDANSIQAGTNIYLPFDCLCLNGELVHRFSYTVTTNDTAEKVVDVTYQKLTTVGAVRSASNSGDLSSIYSGQSLTIPVRCYCGDPNVDPKYGLFSTYVVQADDQLTSLSTNFSVDADVISKFNSDTRNLSPDSIIFIPSKAANGSFPPFSGYVLGTVHWRSNVGIIVGVVVGGIVLAVLLLFALIFGFKHFRRRKLAKEPTMQQSGLLSSSSMAGSKPSRSGSTMLPVPKSVEFTYEELAAATDNFSLAKKIGQGGFASVYYGVIRDQKLAIKKMTLQCTKEFLAELQVLTNVHHTNLVQLIGYCTTNSLFLVYEYIENGTLDHHLRRRKSDDKPPLSWLQRVQICLDSARGLEYIHEHTKPTYIHRDIKSANILLDDNFRAKVADFGLAKLAEEGTGTGIVGTFGYMPPEYALYGEVSPKLDVYAFGVVLFEIISGRVAISSALPSENDQQSPAQNRESRTLTSFFEPVLNDPDGKTLLPKCIDPALNGEYSLDAVWKMAQLARRCTHQSPDMRPTMRFAVVQLMTLASVTQEWDVGYFSRASSQSQPPSGNDQL.

An N-terminal signal peptide occupies residues 1–31 (MKFQMKMKSELCRTYKYWLILLVLWLSGVTQ). At 32–248 (RETGVLIVDA…GTVHWRSNVG (217 aa)) the chain is on the extracellular side. Disulfide bonds link C43/C104, C49/C166, and C102/C164. 3 LysM domains span residues 53–98 (AYYR…NIYL), 113–160 (FSYT…SLTI), and 179–227 (STYV…KAAN). Residues 119–125 (TNDTAEK) and 148–154 (DLSSIYS) each bind chitin. Residues 249 to 269 (IIVGVVVGGIVLAVLLLFALI) form a helical membrane-spanning segment. The Cytoplasmic segment spans residues 270–640 (FGFKHFRRRK…SQPPSGNDQL (371 aa)). The interval 286–308 (MQQSGLLSSSSMAGSKPSRSGST) is disordered. The segment covering 289–307 (SGLLSSSSMAGSKPSRSGS) has biased composition (low complexity). One can recognise a Protein kinase domain in the interval 330-612 (FSLAKKIGQG…RFAVVQLMTL (283 aa)). Residues 336 to 344 (IGQGGFASV) and K357 contribute to the ATP site. D452 functions as the Proton acceptor in the catalytic mechanism.

This sequence belongs to the protein kinase superfamily. Ser/Thr protein kinase family.

The protein localises to the cell membrane. It catalyses the reaction L-seryl-[protein] + ATP = O-phospho-L-seryl-[protein] + ADP + H(+). It carries out the reaction L-threonyl-[protein] + ATP = O-phospho-L-threonyl-[protein] + ADP + H(+). Its function is as follows. Lysin motif (LysM) receptor kinase required as a cell surface receptor for chitin elicitor (chitooligosaccharides) signaling leading to innate immunity in response to biotic stresses. The CERK1, MEKK1a/b, MKK1a/b/c and MPK4a/b proteins are involved in pathogen defense. The pathway induces rapid growth inhibition, cell wall depositions and accumulation of defense-related transcripts. This protein is required for response to chitin. Is able to complement the A.thaliana cerk1 mutant. The chain is Chitin elicitor receptor kinase 1 from Physcomitrium patens (Spreading-leaved earth moss).